The chain runs to 259 residues: Beta-glucanase (259 aa).

The first 31 residues, 1-31 (MVKSKYLVFISVFSLLFGVFVVGFSHQGVKA), serve as a signal peptide directing secretion. The GH16 domain maps to 35–255 (RPMGTAFYES…WVRYTPLQNY (221 aa)). Residue Glu142 is the Nucleophile of the active site. The active-site Proton donor is the Glu146.

This sequence belongs to the glycosyl hydrolase 16 family.

The catalysed reaction is Hydrolysis of (1-&gt;4)-beta-D-glucosidic linkages in beta-D-glucans containing (1-&gt;3)- and (1-&gt;4)-bonds.. Hydrolyzes B-glucans containing mixed beta-1,3 and beta-1,4 linkages. The chain is Beta-glucanase (bglBB) from Brevibacillus brevis (Bacillus brevis).